A 191-amino-acid chain; its full sequence is Thymidine kinase (191 aa).

ATP is bound by residues 9 to 16 and 85 to 88; these read GSMNSGKT and DESQ. The Proton acceptor role is filled by glutamate 86. The Zn(2+) site is built by cysteine 143, cysteine 146, cysteine 181, and cysteine 184.

This sequence belongs to the thymidine kinase family. As to quaternary structure, homotetramer.

Its subcellular location is the cytoplasm. It carries out the reaction thymidine + ATP = dTMP + ADP + H(+). The polypeptide is Thymidine kinase (Listeria monocytogenes serovar 1/2a (strain ATCC BAA-679 / EGD-e)).